The following is a 455-amino-acid chain: Phosphomethylpyrimidine synthase (455 aa).

Substrate contacts are provided by residues N80, M109, Y139, H175, 195 to 197 (SRG), 236 to 239 (DALR), and E275. Residue H279 coordinates Zn(2+). A substrate-binding site is contributed by Y302. Zn(2+) is bound at residue H343. Positions 423, 426, and 431 each coordinate [4Fe-4S] cluster.

The protein belongs to the ThiC family. [4Fe-4S] cluster serves as cofactor.

It catalyses the reaction 5-amino-1-(5-phospho-beta-D-ribosyl)imidazole + S-adenosyl-L-methionine = 4-amino-2-methyl-5-(phosphooxymethyl)pyrimidine + CO + 5'-deoxyadenosine + formate + L-methionine + 3 H(+). It functions in the pathway cofactor biosynthesis; thiamine diphosphate biosynthesis. Functionally, catalyzes the synthesis of the hydroxymethylpyrimidine phosphate (HMP-P) moiety of thiamine from aminoimidazole ribotide (AIR) in a radical S-adenosyl-L-methionine (SAM)-dependent reaction. The polypeptide is Phosphomethylpyrimidine synthase (Synechococcus sp. (strain JA-3-3Ab) (Cyanobacteria bacterium Yellowstone A-Prime)).